A 280-amino-acid polypeptide reads, in one-letter code: 2-dehydro-3-deoxyphosphooctonate aldolase (280 aa).

It belongs to the KdsA family.

It is found in the cytoplasm. The enzyme catalyses D-arabinose 5-phosphate + phosphoenolpyruvate + H2O = 3-deoxy-alpha-D-manno-2-octulosonate-8-phosphate + phosphate. Its pathway is carbohydrate biosynthesis; 3-deoxy-D-manno-octulosonate biosynthesis; 3-deoxy-D-manno-octulosonate from D-ribulose 5-phosphate: step 2/3. It functions in the pathway bacterial outer membrane biogenesis; lipopolysaccharide biosynthesis. The protein is 2-dehydro-3-deoxyphosphooctonate aldolase of Thioalkalivibrio sulfidiphilus (strain HL-EbGR7).